The chain runs to 241 residues: Homeobox protein TGIF2LX (241 aa).

Disordered regions lie at residues Met-1–Pro-58 and Gly-127–Ser-207. The segment covering Glu-10–Asp-39 has biased composition (polar residues). Residues Glu-48–Asp-111 constitute a DNA-binding region (homeobox; TALE-type).

It belongs to the TALE/TGIF homeobox family.

Its subcellular location is the nucleus. Its function is as follows. May have a transcription role in testis. The protein is Homeobox protein TGIF2LX (TGIF2LX) of Pan paniscus (Pygmy chimpanzee).